The sequence spans 672 residues: Flap endonuclease 1 (672 aa).

Residues 1–106 are N-domain; the sequence is MGIKGLTKFI…SELEKRGEKR (106 aa). Aspartate 34 contributes to the Mg(2+) binding site. DNA-binding residues include arginine 47 and arginine 72. Residues aspartate 88, glutamate 160, glutamate 162, aspartate 181, and aspartate 183 each coordinate Mg(2+). The segment at 124–266 is I-domain; sequence EIKKQSGRTV…KTAYNLIKEY (143 aa). DNA is bound at residue glutamate 160. Residues glycine 244 and aspartate 246 each contribute to the DNA site. Aspartate 246 is a binding site for Mg(2+). The tract at residues 349–357 is interaction with PCNA; it reads TQRRLDNFF. The segment at 371 to 610 is disordered; it reads ETKKEQTLPA…EDSPNSYNNI (240 aa). Composition is skewed to basic and acidic residues over residues 413-493, 502-526, and 535-548; these read MKEE…KKSL, DSDK…EKIN, and DHSR…KDNI. Low complexity predominate over residues 549–584; sequence SDINNNNNNNNSSSNNNNISNNHFNSVSSNSTFNSS. Residues 587-603 are compositionally biased toward basic and acidic residues; it reads LKSEDTLKSNSPLKEDS.

This sequence belongs to the XPG/RAD2 endonuclease family. FEN1 subfamily. As to quaternary structure, interacts with PCNA1 and PCNA2. Three molecules of FEN1 bind to one PCNA trimer with each molecule binding to one PCNA monomer. PCNA stimulates the nuclease activity without altering cleavage specificity. It depends on Mg(2+) as a cofactor. In terms of processing, phosphorylated. Phosphorylation upon DNA damage induces relocalization to the nuclear plasma.

It is found in the nucleus. It localises to the nucleolus. Its subcellular location is the nucleoplasm. The protein resides in the mitochondrion. Its function is as follows. Structure-specific nuclease with 5'-flap endonuclease and 5'-3' exonuclease activities involved in DNA replication and repair. During DNA replication, cleaves the 5'-overhanging flap structure that is generated by displacement synthesis when DNA polymerase encounters the 5'-end of a downstream Okazaki fragment. It enters the flap from the 5'-end and then tracks to cleave the flap base, leaving a nick for ligation. Also involved in the long patch base excision repair (LP-BER) pathway, by cleaving within the apurinic/apyrimidinic (AP) site-terminated flap. Acts as a genome stabilization factor that prevents flaps from equilibrating into structures that lead to duplications and deletions. Also possesses 5'-3' exonuclease activity on nicked or gapped double-stranded DNA, and exhibits RNase H activity. Also involved in replication and repair of rDNA and in repairing mitochondrial DNA. This Plasmodium falciparum (isolate 3D7) protein is Flap endonuclease 1.